The following is a 176-amino-acid chain: Nutrient stress-induced DNA-binding protein (176 aa).

The protein belongs to the Dps family. Hexamer.

Involved in protection of chromosomal DNA from damage under nutrient-limited and oxidative stress conditions. Binds heme. The protein is Nutrient stress-induced DNA-binding protein (dpsA) of Synechococcus sp. (strain ATCC 27144 / PCC 6301 / SAUG 1402/1) (Anacystis nidulans).